The sequence spans 356 residues: MLYRDLTLRERQVLGIIIQSFVVSATPVGSRTIARNYNLGLSDATIRNVMADLEADGFISQPHTSAGRVPTDKGYRYYVDLLMNVSGIDEQEKQMIDARFSTRSSELKGTSAEVLGAAAKVLGSISRQLGVVLPPRLSNAVFERLDIVQLASTRIMVVIAIQSLFVKTIVMELTAEISRQKIDDVVNILNERLSGLTLEEIRSTIGKRLSDCQSREGLMNSIVGAADTLFDESSILDRLYVSGTENIVDQPEFKQPQKVRNIITMIEDKFGIARLVDNALPSGAYQGRDREVAISIGTENRTDNAIDLTIVSSPYYAGKMVGKVGIMGPKRMDYEHAVRVVNYMAGCLSEALSGNN.

This sequence belongs to the HrcA family.

In terms of biological role, negative regulator of class I heat shock genes (grpE-dnaK-dnaJ and groELS operons). Prevents heat-shock induction of these operons. The polypeptide is Heat-inducible transcription repressor HrcA (Chlorobaculum parvum (strain DSM 263 / NCIMB 8327) (Chlorobium vibrioforme subsp. thiosulfatophilum)).